The chain runs to 79 residues: Mycoredoxin 1 (79 aa).

Positions 1–79 (MSNVTIYATD…EVIAKIEALA (79 aa)) constitute a Glutaredoxin domain.

The protein belongs to the glutaredoxin family.

The protein resides in the cytoplasm. It carries out the reaction [mycoredoxin]-L-cysteine + arseno-mycothiol + H(+) = [mycoredoxin]-S-mycothiol-L-cysteine + arsenite. In terms of biological role, involved in defense against toxic arsenate. Involved in the mycothiol/myoredoxin redox pathway which uses a mycothioltransferase mechanism; functions as a monothiol mixed disulfide reductase and is recycled by a second mycothiol forming mycothione which in turn is reduced in a NADPH-dependent manner. The polypeptide is Mycoredoxin 1 (mrx1) (Corynebacterium glutamicum (strain ATCC 13032 / K051)).